We begin with the raw amino-acid sequence, 458 residues long: Transmembrane protein 135 (458 aa).

Helical transmembrane passes span 68-88, 96-116, 149-169, 298-318, 331-351, and 380-400; these read ILQSASFLTANGALFMAFFCI, FYLWSPGFGAALPASYVAILV, TLRNGEVLLFCITAAMYMFFF, FQLGAFLGSFVSIYKGTSCFL, IIAGFLAGVSMMFYKSTTISM, and IIYSISTAICFQAAVMEVQTL.

This sequence belongs to the TMEM135 family.

It is found in the mitochondrion membrane. It localises to the peroxisome membrane. In terms of biological role, involved in mitochondrial metabolism by regulating the balance between mitochondrial fusion and fission. May act as a regulator of mitochondrial fission that promotes DNM1L-dependent fission through activation of DNM1L. May be involved in peroxisome organization. In Bos taurus (Bovine), this protein is Transmembrane protein 135.